The sequence spans 670 residues: Septation protein 7 (670 aa).

Residues 33-357 enclose the Septin-type G domain; that stretch reads KGIKFTFMVV…ETYRTERLTK (325 aa). The segment at 43–50 is G1 motif; the sequence is GESGTGKT. Residues 43 to 50, Gly137, 217 to 225, and Arg306 contribute to the GTP site; these read GESGTGKT and KADSFTLNE. The interval 134 to 137 is G3 motif; the sequence is DTPG. The G4 motif stretch occupies residues 216-219; sequence GKAD. Disordered stretches follow at residues 383–513 and 574–670; these read LNDS…QRNQ and LNRQ…VSNH. Positions 395–404 are enriched in low complexity; sequence NNNNNNNNNN. Polar residues predominate over residues 405 to 421; that stretch reads ASTIPSMSNLAQLTTST. 2 stretches are compositionally biased toward low complexity: residues 433 to 446 and 463 to 473; these read SITSTSSSIKKSTS and SSFTSSTSTVS. Positions 472-606 form a coiled coil; it reads VSLEGGEKEG…SVQSGGVDDG (135 aa). Residues 476-487 show a composition bias toward basic and acidic residues; the sequence is GGEKEGGHHDRG. The span at 489 to 500 shows a compositional bias: low complexity; that stretch reads NSTSTNNNNNNN. Residues 631-645 are compositionally biased toward basic and acidic residues; the sequence is QSHEYDNSEYHHDDS.

Belongs to the TRAFAC class TrmE-Era-EngA-EngB-Septin-like GTPase superfamily. Septin GTPase family. Component of the septin complex which consists of CDC3, CDC10, CDC11, CDC12 and probably SEP7. The purified septin complex appeared to have a stoichiometry of 2 CDC3, 1 to 2 CDC10, 1 CDC11, 2 CDC12, and 1 or none SEP7 subunit. Induction of hyphal growth brings about important modifications in septin ring dynamics, because the rings were found in a different state from those of yeast cells. This hyphal-specific state contains a core of stable septins (SEP7, CDC3, and CDC12), and it shows a high CDC10 turnover between the ring and the cytoplasm. Interacts with GIN4. Phosphorylated by GIN4 which stabilizes the GIN4-SEP7 interaction.

It localises to the bud neck. In terms of biological role, septins are GTPases involved in cytokinesis that assemble early in the cell cycle as a patch at the incipient bud site and form a ring before bud emergence, which transforms into an hour-glass shaped collar of cortical filaments that spans both sides of the mother-bud neck. This collar persists until just before cytokinesis, when it splits into two rings that occupy opposite sides of the neck. The septins at the bud neck serve as a structural scaffold that recruits different components involved in diverse processes at specific stages during the cell cycle. Many proteins bind asymmetrically to the septin collar. The septin assembly is regulated by protein kinase GIN4. Septins are also involved in cell morphogenesis, chlamydospores morphogenesis, bud site selection, chitin deposition, cell cycle regulation, cell compartmentalization and spore wall formation. SEP7 is required to convert hyphal septin rings into the hyphal-specific state and is necessary for CDC10 turnover during hyphal growth. The sequence is that of Septation protein 7 (SEP7) from Candida albicans (strain SC5314 / ATCC MYA-2876) (Yeast).